We begin with the raw amino-acid sequence, 290 residues long: HTH-type transcriptional regulator BudR (290 aa).

An HTH lysR-type domain is found at 1-58; the sequence is MELRYLRYFVAVAEARNFTRAAHDLGISQPPLSQQIQRLEREIGTPLLRRLTRGVELT. The H-T-H motif DNA-binding region spans 18–37; the sequence is FTRAAHDLGISQPPLSQQIQ.

The protein belongs to the LysR transcriptional regulatory family.

Its function is as follows. Regulator of the budABC operon for 2,3-butanediol synthesis. This is HTH-type transcriptional regulator BudR (budR) from Raoultella terrigena (Klebsiella terrigena).